We begin with the raw amino-acid sequence, 463 residues long: MGQDAFMELLRSMVGLSLCKIHLLLIAGSCLGLKVTVPSYTVHGIRGQALYLPVHYGFHTPASDIQIIWLFERSHTMPKYLLGSVNKSVVPDLEYQHKFTMMPPNASLLINPLQFTDEGNYIVKVNIQGNGTLSASQKIQVTVDDPVMKPMVQFHPASGAVEYVGNITLTCQVEGGTRLVYQWRKSGKPISINSSHSFSPQNNTLWIVPVTKEDIGNYTCLVSNPVSEMESDIIMPTIYYGPYGLQVNSDKGLKVGEVFTVDLGEAVLFDCSADSYPPNTYSWIQRSDNTTHVIKHGPHLEVASEKVAQKTADYVCCAYNNITGRRDETRFTVIITSVGLEKLAQRGKSLSPLASITGISLFLIISMCLLFLWKKYQPYKAIRQKLEGRPESEYRKAQTFSGHEDALSDFGIYEFVTFPDASGVSRMSSRSSPASDGVTGQDIHGTIYEVIQHIPEQQQENTE.

An N-terminal signal peptide occupies residues 1–32; that stretch reads MGQDAFMELLRSMVGLSLCKIHLLLIAGSCLG. N-linked (GlcNAc...) asparagine glycosylation is found at N86, N130, and N166. 2 consecutive Ig-like C2-type domains span residues 150–234 and 236–332; these read PMVQ…SDII and PTIY…TRFT. 2 cysteine pairs are disulfide-bonded: C171-C220 and C271-C316. A glycan (N-linked (GlcNAc...) asparagine) is linked at N321. The chain crosses the membrane as a helical span at residues 353-373; the sequence is LASITGISLFLIISMCLLFLW. The Cytoplasmic segment spans residues 374–463; the sequence is KKYQPYKAIR…IPEQQQENTE (90 aa).

Poly-ADP-ribosylated (PARsylated) by tankyrase TNKS during late G2 and prophase, leading to translocation to mitotic centrosomes. In terms of processing, N-glycosylated.

It localises to the golgi apparatus membrane. It is found in the cytoplasm. The protein resides in the cytoskeleton. Its subcellular location is the spindle. The protein localises to the microtubule organizing center. It localises to the centrosome. It is found in the midbody. Required during prometaphase for centrosome maturation. Following poly-ADP-ribosylation (PARsylation) by TNKS, translocates from the Golgi apparatus to mitotic centrosomes and plays a key role in the formation of robust microtubules for prompt movement of chromosomes: anchors AKAP9/CG-NAP, a scaffold protein of the gamma-tubulin ring complex and promotes centrosome maturation. This Mus musculus (Mouse) protein is HEPACAM family member 2 (Hepacam2).